Here is a 332-residue protein sequence, read N- to C-terminus: 2,3-diketo-L-gulonate reductase (332 aa).

His44 acts as the Proton donor in catalysis. Residues 168-174 (ITMVDMS), 224-225 (WK), and 304-306 (GHE) each bind NAD(+).

This sequence belongs to the LDH2/MDH2 oxidoreductase family. DlgD subfamily. In terms of assembly, homodimer.

It is found in the cytoplasm. The enzyme catalyses 3-dehydro-L-gulonate + NAD(+) = 2,3-dioxo-L-gulonate + NADH + H(+). It catalyses the reaction 3-dehydro-L-gulonate + NADP(+) = 2,3-dioxo-L-gulonate + NADPH + H(+). In terms of biological role, catalyzes the reduction of 2,3-diketo-L-gulonate in the presence of NADH, to form 3-keto-L-gulonate. This Salmonella agona (strain SL483) protein is 2,3-diketo-L-gulonate reductase.